The chain runs to 7094 residues: Replicase polyprotein 1ab (7094 aa).

Residues 54–196 (PENHVMVDCR…PWVMYLRKCG (143 aa)) enclose the CoV Nsp1 globular domain. A BetaCoV Nsp1 C-terminal domain is found at 216 to 246 (FKVEDAYDLVHDEPKGKFSKKAYALIRGYRG). One can recognise a CoV Nsp2 N-terminal domain in the interval 250-519 (LLYVDQYGCD…LICKALYLDY (270 aa)). Positions 392, 397, 413, and 416 each coordinate Zn(2+). The tract at residues 392 to 416 (CEQDLCDFKGWVPGNMIDGFACTTC) is C4. The CoV Nsp2 middle domain maps to 524–713 (CGNLHQRELL…AQAFRSVAKV (190 aa)). A CoV Nsp2 C-terminal domain is found at 733-851 (RRRICLSGSK…LDQAWRVPCA (119 aa)). The region spanning 853 to 966 (RRVTFKEQPT…LYCAFTAPED (114 aa)) is the Ubiquitin-like 1 domain. One can recognise a Peptidase C16 1 domain in the interval 1036-1274 (DLESVIQDYE…IAQLYGSCIT (239 aa)). Residue cysteine 1074 is the For PL1-PRO activity of the active site. Positions 1151, 1154, 1177, and 1179 each coordinate Zn(2+). The C4-type 1 zinc finger occupies 1151–1179 (CIKCDLALKLKGLDAMFFYGDVVSHVCKC). Residues histidine 1225 and aspartate 1236 each act as for PL1-PRO activity in the active site. The 161-residue stretch at 1275-1435 (PNVCFVKGDI…LISKCQITAV (161 aa)) folds into the Macro domain. The DPUP domain occupies 1491-1563 (DDARTFVQSN…VAQIKALFLD (73 aa)). Residues 1562-1617 (LDKVDILLTVDGVNFTNRFVPVGESFGKSLGNVFCDGVNVTKHKCDINYKGKVFFQ) form the Ubiquitin-like 2 domain. The region spanning 1631–1892 (SSFNFDQKEL…KIEYNPDLSQ (262 aa)) is the Peptidase C16 2 domain. Cysteine 1671 acts as the For PL2-PRO activity in catalysis. 4 residues coordinate Zn(2+): cysteine 1749, cysteine 1751, cysteine 1783, and cysteine 1785. The C4-type 2 zinc-finger motif lies at 1749–1785 (CKCGVKQEQRTGVDAVMHFGTLSREDLEIGYTVDCSC). Active-site for PL2-PRO activity residues include histidine 1828 and aspartate 1842. One can recognise a Nucleic acid-binding domain in the interval 1906 to 2007 (IKAQFKTFEK…TYFNRPLLVD (102 aa)). One can recognise a G2M domain in the interval 2020 to 2169 (DDGGDISESD…ADNKVIYTTE (150 aa)). 3 consecutive transmembrane segments (helical) span residues 2138 to 2158 (ISACFNFIKWLFVLLFGWIKI), 2199 to 2219 (ACIIATIFLLWFNFIYANVIF), and 2227 to 2247 (IGFLPTFVGKIAQWIKSTFSL). The segment at 2138–2385 (ISACFNFIKW…ASFIKLFILF (248 aa)) is HD1. The 3Ecto domain occupies 2235–2296 (GKIAQWIKST…AIDVVQYEAD (62 aa)). Intrachain disulfides connect cysteine 2251–cysteine 2275 and cysteine 2266–cysteine 2272. 3 helical membrane-spanning segments follow: residues 2313–2333 (LIVSYALYTAWFYPLFALISI), 2343–2363 (LFMLSTLHWSVRLLVSLANML), and 2365–2385 (AHVFMRFYIIIASFIKLFILF). The Y1 stretch occupies residues 2383 to 2473 (ILFRHVAYGC…ELKRPIQPTD (91 aa)). Residues 2383–2750 (ILFRHVAYGC…LTTPFSLKGG (368 aa)) form the CoV Nsp3 Y domain. Zn(2+) is bound by residues histidine 2387, cysteine 2392, cysteine 2397, cysteine 2400, cysteine 2433, histidine 2436, cysteine 2440, and cysteine 2443. Residues 2387-2400 (HVAYGCSKPGCLFC) are ZF1. Residues 2433-2443 (CSKHQWNCIDC) are ZF2. The segment at 2474 to 2566 (VAYHTVTDVK…MVDKNLITTA (93 aa)) is Y2. The segment at 2474 to 2750 (VAYHTVTDVK…LTTPFSLKGG (277 aa)) is coV-Y. The segment at 2567-2649 (NTGTSVTETM…DSVMSAVSAG (83 aa)) is Y3. The segment at 2650 to 2750 (LELTDESCNN…LTTPFSLKGG (101 aa)) is Y4. The next 7 helical transmembrane spans lie at 2752-2772 (VFSYFVYVCFLLSLVCFIGLW), 2824-2844 (STFGLSYYSNSMACPIVVAVV), 3009-3029 (VFDLIYQLFKGLAQPVDFLAL), 3031-3051 (ASSIAGAILAVIVVLVFYYLI), 3063-3083 (IVFVNVIVWCVNFMMLFVFQV), 3090-3110 (VYAICYFYATLYFPSEISVIM), and 3115-3135 (LVMYGTIMPLWFCLLYISVVV). The segment at 2752 to 3135 (VFSYFVYVCF…FCLLYISVVV (384 aa)) is HD2. Residues 3149 to 3246 (LGTSVRSDGT…TASVSTSFLQ (98 aa)) form the Nsp4C domain. In terms of domain architecture, Peptidase C30 spans 3247–3549 (SGIVKMVNPT…YQQLAGIKLQ (303 aa)). Active-site for 3CL-PRO activity residues include histidine 3287 and cysteine 3391. A run of 7 helical transmembrane segments spans residues 3558 to 3578 (GIVCWIMASTFLFSCIITAFV), 3588 to 3608 (TNMLSITFCALCVISLAMLLV), 3614 to 3634 (YLTMYIIPVLFTLLYNNYLVV), 3657 to 3677 (TYTDEVIYGMLLLIGMVFVTL), 3684 to 3704 (LFSFIMFVGRVISVVSLWYMG), 3711 to 3731 (ILLMLASLFGTYTWTTALSMA), and 3755 to 3775 (IVLVCYLFIGYIISCYWGLFS). Positions 3558–3775 (GIVCWIMAST…IISCYWGLFS (218 aa)) are HD3. Residues 3837-3925 (SKLTDVKCAN…DYAKDNTVLQ (89 aa)) form the RdRp Nsp7 cofactor domain. The region spanning 3926 to 4122 (ALQSEFVNMA…HNEVSATVLQ (197 aa)) is the RdRp Nsp8 cofactor domain. Residues 4123–4232 (NNELMPAKLK…GTISSTVRLQ (110 aa)) form the Nsp9 ssRNA-binding domain. An ExoN/MTase coactivator domain is found at 4233 to 4370 (AGTATEYASN…CVSTDTTVQS (138 aa)). Zn(2+)-binding residues include cysteine 4306, cysteine 4309, histidine 4315, cysteine 4322, cysteine 4348, cysteine 4351, cysteine 4359, and cysteine 4361. Zinc fingers lie at residues 4306–4322 (CIYCRARVEHPDVDGLC) and 4348–4361 (CQVCGFWRDGSCSC). In terms of domain architecture, NiRAN spans 4375 to 4630 (FLNRVRGTSV…DCELYVNNAY (256 aa)). The Mn(2+) site is built by asparagine 4578 and aspartate 4587. Residues 4631 to 4729 (RLFDLVQYDF…MNMDVDTHRY (99 aa)) form the Nsp12 Interface domain. 5 residues coordinate Zn(2+): histidine 4660, cysteine 4666, cysteine 4671, cysteine 4675, and cysteine 4852. The 568-residue stretch at 4730 to 5297 (RLSLKDLLLY…NMYLRSAVMQ (568 aa)) folds into the Nsp12 RNA-dependent RNA polymerase domain. A rdRp Fingers N-ter region spans residues 4732–4946 (SLKDLLLYAA…HQKCLKSIAA (215 aa)). The segment at 4947 to 4985 (TRGVPVVIGTTKFYGGWDDMLRRLIKDVDNPVLMGWDYP) is rdRp Palm N-ter. The RdRp catalytic domain occupies 4977 to 5139 (PVLMGWDYPK…CYNSDYASKG (163 aa)). Residues 4986–5044 (KCDRAMPNILRIVSSLVLARKHEACCSQSDRFYRLANECAQVLSEIVMCGGCYYVKPGG) form a rdRp Fingers C-ter region. 3 residues coordinate Zn(2+): histidine 5007, cysteine 5010, and cysteine 5011. Positions 5045–5180 (TSSGDATTAF…NNGPHEFCSQ (136 aa)) are rdRp Palm C-ter. Catalysis depends on residues serine 5124, aspartate 5125, and aspartate 5126. Residues 5181-5297 (HTMLVKMDGD…NMYLRSAVMQ (117 aa)) are rdRp Thumb. The 113-residue stretch at 5298-5410 (SVGACVVCSS…DDFNRIASCK (113 aa)) folds into the CV ZBD domain. Cysteine 5302, cysteine 5305, cysteine 5313, cysteine 5316, cysteine 5323, cysteine 5326, histidine 5330, histidine 5336, cysteine 5347, cysteine 5352, cysteine 5369, and histidine 5372 together coordinate Zn(2+). Positions 5553-5734 (SVLETFQNNV…MCCLGPDIFL (182 aa)) constitute a (+)RNA virus helicase ATP-binding domain. 5578–5585 (GPPGTGKS) is an ATP binding site. The 170-residue stretch at 5735-5904 (GTCYRCPKEI…VETRVQCSTN (170 aa)) folds into the (+)RNA virus helicase C-terminal domain. The ExoN domain occupies 5971 to 6186 (LFITKEEAVK…RCLAVYDCFC (216 aa)). Active-site residues include aspartate 5989, glutamate 5991, and glutamate 6090. Residues cysteine 6106, cysteine 6109, cysteine 6125, histidine 6128, histidine 6156, cysteine 6160, and histidine 6163 each contribute to the Zn(2+) site. Catalysis depends on residues histidine 6167 and aspartate 6172. Zn(2+) is bound at residue cysteine 6178. Residues 6195–6421 (YPIISNELSI…NLWNTFTKLQ (227 aa)) form the N7-MTase domain. Position 6230-6236 (6230-6236 (DIGNPKA)) interacts with S-adenosyl-L-methionine. Positions 6308 to 6322 (CNGGSLYVNKHAFHT) are gpppA-binding. Zn(2+) contacts are provided by cysteine 6346, cysteine 6367, cysteine 6378, and histidine 6381. The region spanning 6422–6482 (SLENVVYNLV…NVAVELFAKR (61 aa)) is the Nsp15 N-terminal oligomerization domain. An AV-Nsp11N/CoV-Nsp15M domain is found at 6483-6603 (SIRHHPELKL…FAVRKEGQDV (121 aa)). In terms of domain architecture, NendoU spans 6653 to 6792 (TCRTDMEKDF…NDEKVMTFYP (140 aa)). Residues histidine 6683, histidine 6698, lysine 6738, lysine 6841, aspartate 6925, lysine 6965, and glutamate 6998 contribute to the active site. Residues 6797-7091 (ASDWKPGYSM…KEVFVGDSLV (295 aa)) form the Nidovirus-type SAM-dependent 2'-O-MTase domain.

The protein belongs to the coronaviruses polyprotein 1ab family. Interacts with host PHB and PHB2. As to quaternary structure, interacts with papain-like protease nsp3 and non-structural protein 6. In terms of assembly, monomer. Homodimer. Only the homodimer shows catalytic activity. Interacts with nsp8 and nsp12 to form the replication-transcription complex (RTC): nsp12, nsp7, two subunits of nsp8, and up to two subunits of nsp13. As to quaternary structure, interacts with nsp7, nsp13 and nsp12 to form the replication-transcription complex (RTC): nsp12, nsp7, two subunits of nsp8, and up to two subunits of nsp13. In terms of assembly, interacts with nsp12. Interacts with proofreading exoribonuclease nsp14 and 2'-O-methyltransferase nsp16; these interactions enhance nsp14 and nsp16 enzymatic activities. As to quaternary structure, interacts with nsp7 and nsp8 to form the replication-transcription complex (RTC): nsp12, nsp7, two subunits of nsp8, and up to two subunits of nsp13. Interacts with nsp9. In terms of assembly, interacts with nsp8 to form the replication-transcription complex (RTC): nsp12, nsp7, two subunits of nsp8, and up to two subunits of nsp13. It depends on Mn(2+) as a cofactor. Mg(2+) is required as a cofactor. Specific enzymatic cleavages in vivo by its own proteases yield mature proteins. 3CL-PRO and PL-PRO proteinases are autocatalytically processed.

The protein resides in the host membrane. Its subcellular location is the host cytoplasm. It is found in the host perinuclear region. It localises to the host endoplasmic reticulum-Golgi intermediate compartment. The catalysed reaction is RNA(n) + a ribonucleoside 5'-triphosphate = RNA(n+1) + diphosphate. It carries out the reaction ATP + H2O = ADP + phosphate + H(+). It catalyses the reaction Thiol-dependent hydrolysis of ester, thioester, amide, peptide and isopeptide bonds formed by the C-terminal Gly of ubiquitin (a 76-residue protein attached to proteins as an intracellular targeting signal).. The enzyme catalyses a 5'-end (N(7)-methyl 5'-triphosphoguanosine)-ribonucleoside in mRNA + S-adenosyl-L-methionine = a 5'-end (N(7)-methyl 5'-triphosphoguanosine)-(2'-O-methyl-ribonucleoside) in mRNA + S-adenosyl-L-homocysteine + H(+). The catalysed reaction is uridylyl-uridylyl-ribonucleotide-RNA = a 3'-end uridylyl-2',3'-cyclophospho-uridine-RNA + a 5'-end dephospho-ribonucleoside-RNA. It carries out the reaction a 5'-end diphospho-ribonucleoside in mRNA + GTP + H(+) = a 5'-end (5'-triphosphoguanosine)-ribonucleoside in mRNA + diphosphate. It catalyses the reaction a 5'-end (5'-triphosphoguanosine)-ribonucleoside in mRNA + S-adenosyl-L-methionine = a 5'-end (N(7)-methyl 5'-triphosphoguanosine)-ribonucleoside in mRNA + S-adenosyl-L-homocysteine. In terms of biological role, the replicase polyprotein of coronaviruses is a multifunctional protein: it contains the activities necessary for the transcription of negative stranded RNA, leader RNA, subgenomic mRNAs and progeny virion RNA as well as proteinases responsible for the cleavage of the polyprotein into functional products. Inhibits host translation by interacting with the 40S ribosomal subunit. The nsp1-40S ribosome complex further induces an endonucleolytic cleavage near the 5'UTR of host mRNAs, targeting them for degradation. Viral mRNAs are not susceptible to nsp1-mediated endonucleolytic RNA cleavage thanks to the presence of a 5'-end leader sequence and are therefore protected from degradation. By suppressing host gene expression, nsp1 facilitates efficient viral gene expression in infected cells and evasion from host immune response. Functionally, may play a role in the modulation of host cell survival signaling pathway by interacting with host PHB and PHB2. Indeed, these two proteins play a role in maintaining the functional integrity of the mitochondria and protecting cells from various stresses. Its function is as follows. Responsible for the cleavages located at the N-terminus of the replicase polyprotein. In addition, PL-PRO possesses a deubiquitinating/deISGylating activity and processes both 'Lys-48'- and 'Lys-63'-linked polyubiquitin chains from cellular substrates. Participates together with nsp4 in the assembly of virally-induced cytoplasmic double-membrane vesicles necessary for viral replication. Antagonizes innate immune induction of type I interferon by blocking the phosphorylation, dimerization and subsequent nuclear translocation of host IRF3. Also prevents host NF-kappa-B signaling. In terms of biological role, participates in the assembly of virally-induced cytoplasmic double-membrane vesicles necessary for viral replication. Cleaves the C-terminus of replicase polyprotein at 11 sites. Recognizes substrates containing the core sequence [ILMVF]-Q-|-[SGACN]. Also able to bind an ADP-ribose-1''-phosphate (ADRP). Functionally, plays a role in the initial induction of autophagosomes from host endoplasmic reticulum. Later, limits the expansion of these phagosomes that are no longer able to deliver viral components to lysosomes. Its function is as follows. Forms a hexadecamer with nsp8 (8 subunits of each) that may participate in viral replication by acting as a primase. Alternatively, may synthesize substantially longer products than oligonucleotide primers. In terms of biological role, forms a hexadecamer with nsp7 (8 subunits of each) that may participate in viral replication by acting as a primase. Alternatively, may synthesize substantially longer products than oligonucleotide primers. Forms a primer, NSP9-pU, which is utilized by the polymerase for the initiation of RNA chains. Interacts with ribosome signal recognition particle RNA (SRP). Together with NSP8, suppress protein integration into the cell membrane, thereby disrupting host immune defenses. Functionally, plays a pivotal role in viral transcription by stimulating both nsp14 3'-5' exoribonuclease and nsp16 2'-O-methyltransferase activities. Therefore plays an essential role in viral mRNAs cap methylation. Its function is as follows. RNA-directed RNA polymerase that catalyzes the transcription of viral genomic and subgenomic RNAs. Acts in complex with nsp7 and nsp8 to transcribe both the minus and positive strands of genomic RNA. The kinase-like NiRAN domain of NSP12 attaches one or more nucleotides to the amino terminus of NSP9, forming a covalent RNA-protein intermediate that serves as transcription/replication primer. Subgenomic RNAs (sgRNAs) are formed by discontinuous transcription: The polymerase has the ability to pause at transcription-regulating sequences (TRS) and jump to the leader TRS, resulting in a major deletion. This creates a series of subgenomic RNAs that are replicated, transcribed and translated. In addition, Nsp12 is a subunit of the viral RNA capping enzyme that catalyzes the RNA guanylyltransferase reaction for genomic and sub-genomic RNAs. Subsequently, the NiRAN domain transfers RNA to GDP, and forms the core cap structure GpppA-RNA. In terms of biological role, multi-functional protein with a zinc-binding domain in N-terminus displaying RNA and DNA duplex-unwinding activities with 5' to 3' polarity. Activity of helicase is dependent on magnesium. Plays a role in viral RNA synthesis through two distinct activities. The N7-guanine methyltransferase activity plays a role in the formation of the cap structure GpppA-RNA. The proofreading exoribonuclease reduces the sensitivity of the virus to RNA mutagens during replication. This activity acts on both ssRNA and dsRNA in a 3'-5' direction. Functionally, plays a role in viral transcription/replication and prevents the simultaneous activation of host cell dsRNA sensors, such as MDA5/IFIH1, OAS, and PKR. Acts by degrading the 5'-polyuridines generated during replication of the poly(A) region of viral genomic and subgenomic RNAs. Catalyzes a two-step reaction in which a 2'3'-cyclic phosphate (2'3'-cP) is first generated by 2'-O transesterification, which is then hydrolyzed to a 3'-phosphate (3'-P). If not degraded, poly(U) RNA would hybridize with poly(A) RNA tails and activate host dsRNA sensors. Its function is as follows. Methyltransferase that mediates mRNA cap 2'-O-ribose methylation to the 5'-cap structure of viral mRNAs. N7-methyl guanosine cap is a prerequisite for binding of nsp16. Therefore plays an essential role in viral mRNAs cap methylation which is essential to evade immune system. In Bos taurus (Bovine), this protein is Replicase polyprotein 1ab (rep).